A 343-amino-acid polypeptide reads, in one-letter code: Pyridoxal 5'-phosphate synthase subunit PDX1 (343 aa).

Aspartate 73 lines the D-ribose 5-phosphate pocket. The active-site Schiff-base intermediate with D-ribose 5-phosphate is lysine 130. Glycine 202 serves as a coordination point for D-ribose 5-phosphate. Glutamine 214 lines the D-glyceraldehyde 3-phosphate pocket. Residues glycine 263 and 284–285 contribute to the D-ribose 5-phosphate site; that span reads GS.

The protein belongs to the PdxS/SNZ family.

It catalyses the reaction aldehydo-D-ribose 5-phosphate + D-glyceraldehyde 3-phosphate + L-glutamine = pyridoxal 5'-phosphate + L-glutamate + phosphate + 3 H2O + H(+). Its pathway is cofactor biosynthesis; pyridoxal 5'-phosphate biosynthesis. Its function is as follows. Catalyzes the formation of pyridoxal 5'-phosphate from ribose 5-phosphate (RBP), glyceraldehyde 3-phosphate (G3P) and ammonia. The ammonia is provided by PDX2. Can also use ribulose 5-phosphate and dihydroxyacetone phosphate as substrates, resulting from enzyme-catalyzed isomerization of RBP and G3P, respectively. Also plays an indirect role in resistance to singlet oxygen-generating photosensitizers. The sequence is that of Pyridoxal 5'-phosphate synthase subunit PDX1 (PDX1) from Cercospora nicotianae (Barn spot disease fungus).